Consider the following 445-residue polypeptide: UPF0210 protein SEQ_0468 (445 aa).

This sequence belongs to the UPF0210 family. In terms of assembly, homodimer.

This chain is UPF0210 protein SEQ_0468, found in Streptococcus equi subsp. equi (strain 4047).